The chain runs to 262 residues: Small ribosomal subunit protein eS4y (262 aa).

The S4 RNA-binding domain occupies 42–104 (LPLVLIIRNR…TNENFRLLYD (63 aa)).

The protein belongs to the eukaryotic ribosomal protein eS4 family.

It localises to the cytoplasm. This is Small ribosomal subunit protein eS4y (RPS4B) from Arabidopsis thaliana (Mouse-ear cress).